The primary structure comprises 331 residues: Small ribosomal subunit protein uS2 (331 aa).

This sequence belongs to the universal ribosomal protein uS2 family.

The protein is Small ribosomal subunit protein uS2 of Bradyrhizobium diazoefficiens (strain JCM 10833 / BCRC 13528 / IAM 13628 / NBRC 14792 / USDA 110).